Reading from the N-terminus, the 87-residue chain is UPF0367 protein SynRCC307_0258 (87 aa).

This sequence belongs to the UPF0367 family.

This chain is UPF0367 protein SynRCC307_0258, found in Synechococcus sp. (strain RCC307).